A 194-amino-acid polypeptide reads, in one-letter code: Ancillary SecYEG translocon subunit (194 aa).

Residues 1 to 10 lie on the Cytoplasmic side of the membrane; the sequence is MHLNKMKKVS. The chain crosses the membrane as a helical span at residues 11–31; it reads LKTYLVLFFLIFFIFCSFWFI. Residues 32-194 lie on the Periplasmic side of the membrane; sequence KPKEKKLKLE…INMKINEIKR (163 aa).

It belongs to the YfgM family. Interacts with the SecYEG translocon. Forms a complex with PpiD.

Its subcellular location is the cell inner membrane. Its function is as follows. May mediate protein transfer from the SecYEG translocon to the periplasmic chaperone network via its periplasmic C-terminal region. This Buchnera aphidicola subsp. Schizaphis graminum (strain Sg) protein is Ancillary SecYEG translocon subunit.